The following is a 235-amino-acid chain: Probable 2-phosphosulfolactate phosphatase (235 aa).

The protein belongs to the ComB family. The cofactor is Mg(2+).

The enzyme catalyses (2R)-O-phospho-3-sulfolactate + H2O = (2R)-3-sulfolactate + phosphate. In Clostridium novyi (strain NT), this protein is Probable 2-phosphosulfolactate phosphatase.